The following is a 278-amino-acid chain: Protein mtd-1 (278 aa).

Residues 1–17 (MRSSLLLLVFFLSIGWA) form the signal peptide. The Extracellular portion of the chain corresponds to 18–254 (RYCVHNEKSW…EMLEEIEARK (237 aa)). Asn40, Asn73, Asn163, and Asn190 each carry an N-linked (GlcNAc...) asparagine glycan. A helical membrane pass occupies residues 255–271 (VPVDSSAPVNIILSIAF). Topologically, residues 272-278 (SIFLIHF) are cytoplasmic.

Its subcellular location is the cell membrane. Plays a role in mechanosensory transduction (touch sensitivity). This chain is Protein mtd-1, found in Caenorhabditis elegans.